The chain runs to 404 residues: MTDLRSATGPYFGDFGGRYVPESLVAALDELAEAWEELKVDPAFIEELKELHRSYTGRPSLITEVPRFAEHAGGARIILKREDLNHTGSHKINNVLGQALLTKKIGKKRIIAETGAGQHGVATATAAALFGLDCVIYMGEVDTERQALNVARMRLLGAEVIPVRSGSRTLKDAINDAMRDWVTNVETTNYVFGTVAGPHPFPAMVRDLQKVIGEEAREQVLALTGRLPDAVAACVGGGSNAIGIFHAFLDDADVALYGFEAGGDGADTPRTAATITKGRPGMLHGARSYLLQDEDGQTIDSHSISAGLDYPGVGPEHSWLSDLGRASYRPVTDDQAMSALRLLSRTEGIIPAIESAHALAGALELGKELGPDSIILINLSGRGDKDMETAGKYFDLIDAGAEQS.

N6-(pyridoxal phosphate)lysine is present on lysine 91.

Belongs to the TrpB family. As to quaternary structure, tetramer of two alpha and two beta chains. The cofactor is pyridoxal 5'-phosphate.

The enzyme catalyses (1S,2R)-1-C-(indol-3-yl)glycerol 3-phosphate + L-serine = D-glyceraldehyde 3-phosphate + L-tryptophan + H2O. Its pathway is amino-acid biosynthesis; L-tryptophan biosynthesis; L-tryptophan from chorismate: step 5/5. In terms of biological role, the beta subunit is responsible for the synthesis of L-tryptophan from indole and L-serine. This is Tryptophan synthase beta chain from Clavibacter michiganensis subsp. michiganensis (strain NCPPB 382).